We begin with the raw amino-acid sequence, 329 residues long: Malate dehydrogenase (329 aa).

12–18 (GAAGQIG) lines the NAD(+) pocket. Residues Arg95 and Arg101 each coordinate substrate. NAD(+)-binding positions include Asn108, Gln115, and 132–134 (VGN). Asn134 and Arg165 together coordinate substrate. Catalysis depends on His190, which acts as the Proton acceptor.

Belongs to the LDH/MDH superfamily. MDH type 2 family.

The catalysed reaction is (S)-malate + NAD(+) = oxaloacetate + NADH + H(+). Functionally, catalyzes the reversible oxidation of malate to oxaloacetate. This chain is Malate dehydrogenase, found in Bordetella avium (strain 197N).